Here is a 251-residue protein sequence, read N- to C-terminus: Probable transcriptional regulatory protein Cpar_0525 (251 aa).

It belongs to the TACO1 family.

The protein resides in the cytoplasm. This is Probable transcriptional regulatory protein Cpar_0525 from Chlorobaculum parvum (strain DSM 263 / NCIMB 8327) (Chlorobium vibrioforme subsp. thiosulfatophilum).